Consider the following 48-residue polypeptide: Cuticle protein 6 isoform b (48 aa).

The protein is Cuticle protein 6 isoform b of Limulus polyphemus (Atlantic horseshoe crab).